We begin with the raw amino-acid sequence, 223 residues long: MAQETNHSQAPMLCSTGCGFYGNPRTNGMCSVCYKEHLQRQNSSNGRISPPAASVSSLSESLPVQCADGSVPDAQSALDSTSSSMQPGPVSNQSLLSESVAPSQVDSTSVDKAVSETEDLQGPRAEGLVPLECDPPSSVSDTTQQPSEEQSKSLEKPKQKKNRCFMCRKKVGLTGFECRCGNVYCGVHRYSDVHNCSYNYKADAAEKIRKENPVVVGEKIQKI.

Residues 8–42 (SQAPMLCSTGCGFYGNPRTNGMCSVCYKEHLQRQN) form an A20-type zinc finger. Zn(2+)-binding residues include Cys-14, Cys-18, Cys-30, and Cys-33. The segment at 41 to 155 (QNSSNGRISP…PSEEQSKSLE (115 aa)) is disordered. Ser-49 carries the post-translational modification Phosphoserine. Composition is skewed to polar residues over residues 77–110 (ALDSTSSSMQPGPVSNQSLLSESVAPSQVDSTSV) and 137–148 (SSVSDTTQQPSE). The AN1-type zinc-finger motif lies at 158–204 (KQKKNRCFMCRKKVGLTGFECRCGNVYCGVHRYSDVHNCSYNYKADA). Residues Cys-164, Cys-167, Cys-178, Cys-180, Cys-185, His-188, His-194, and Cys-196 each contribute to the Zn(2+) site. At Lys-219 the chain carries N6-acetyllysine.

In terms of assembly, interacts with PKN1. Interacts with TRAF2. Interacts with mono- and polyubiquitin. Interacts with PEX6. Interacts with PEX5 (Cys-linked ubiquitinated).

The protein resides in the cytoplasm. Functionally, involved in regulation of TNF-alpha induced NF-kappa-B activation and apoptosis. Involved in modulation of 'Lys-48'-linked polyubiquitination status of TRAF2 and decreases association of TRAF2 with RIPK1. Required for PTS1 target sequence-dependent protein import into peroxisomes and PEX5 stability; may cooperate with PEX6. In vitro involved in PEX5 export from the cytosol to peroxisomes. This is AN1-type zinc finger protein 6 (Zfand6) from Mus musculus (Mouse).